The following is a 534-amino-acid chain: Inorganic phosphate transporter 1-4 (534 aa).

Residues 1–24 (MAREQLQVLNALDVAKTQWYHFTA) lie on the Cytoplasmic side of the membrane. A helical membrane pass occupies residues 25-45 (IIIAGMGFFTDAYDLFCISLV). Topologically, residues 46-70 (TKLLGRIYYHVEGAQKPGTLPPNVA) are extracellular. Residues 71–91 (AAVNGVAFCGTLAGQLFFGWL) traverse the membrane as a helical segment. At 92–99 (GDKLGRKK) the chain is on the cytoplasmic side. The chain crosses the membrane as a helical span at residues 100-120 (VYGMTLMVMVLCSIASGLSFG). Residues 121-131 (HEPKAVMATLC) lie on the Extracellular side of the membrane. Residues 132–152 (FFRFWLGFGIGGDYPLSATIM) form a helical membrane-spanning segment. Over 153-161 (SEYANKKTR) the chain is Cytoplasmic. A helical transmembrane segment spans residues 162 to 182 (GAFVSAVFAMQGFGIMAGGIF). Residues 183 to 211 (AIIISSAFEAKFPSPAYADDALGSTIPQA) lie on the Extracellular side of the membrane. Residues 212–232 (DLVWRIILMAGAIPAAMTYYS) form a helical membrane-spanning segment. The Cytoplasmic portion of the chain corresponds to 233–293 (RSKMPETARY…GLFSKEFMSR (61 aa)). Residues 294–314 (HGLHLLGTTSTWFLLDIAFYS) form a helical membrane-spanning segment. Residues 315 to 349 (QNLFQKDIFSAIGWIPPAQSMNAIQEVFKIARAQT) are Extracellular-facing. The helical transmembrane segment at 350-370 (LIALCSTVPGYWFTVAFIDVI) threads the bilayer. Residues 371–372 (GR) lie on the Cytoplasmic side of the membrane. A helical transmembrane segment spans residues 373 to 393 (FAIQMMGFFFMTVFMFALAIP). Topologically, residues 394–403 (YNHWTHKENR) are extracellular. The chain crosses the membrane as a helical span at residues 404 to 424 (IGFVIMYSLTFFFANFGPNAT). At 425–442 (TFVVPAEIFPARFRSTCH) the chain is on the cytoplasmic side. Residues 443-463 (GISAASGKLGAMVGAFGFLYL) form a helical membrane-spanning segment. Topologically, residues 464-484 (AQNPDKDKTDAGYPPGIGVRN) are extracellular. Residues 485 to 505 (SLIVLGVVNFLGILFTFLVPE) form a helical membrane-spanning segment. Topologically, residues 506 to 534 (SKGKSLEEMSGENEDNENSNNDSRTVPIV) are cytoplasmic. The disordered stretch occupies residues 512 to 534 (EEMSGENEDNENSNNDSRTVPIV). 2 positions are modified to phosphoserine: serine 524 and serine 528.

Belongs to the major facilitator superfamily. Phosphate:H(+) symporter (TC 2.A.1.9) family. As to quaternary structure, interacts with NLA. In terms of processing, ubiquitinated by NLA. Ubiquitination of PHT1-4 leads to its degradation by the proteasome. As to expression, mostly expressed in roots, in tissues connecting the lateral roots to the primary root. Also present in flowers, in senescing anther filaments and in the abscission zone at the base of siliques. Expressed in hydathodes and axillary buds, and in some senescing leaves. After Pi starvation, localized in all cells of undifferentiated root segments, including root tips and root hairs, and in the epidermis, cortex and stellar regions of mature root segments.

Its subcellular location is the cell membrane. High-affinity transporter for external inorganic phosphate. Acts as a H(+):phosphate symporter in both low- and high-Pi conditions. Confers sensitivity to arsenate. This Arabidopsis thaliana (Mouse-ear cress) protein is Inorganic phosphate transporter 1-4 (PHT1-4).